Reading from the N-terminus, the 378-residue chain is Polygalacturonase (378 aa).

A signal peptide spans 1–20 (MILTRSVVLGFLGSASLALA). A disulfide bridge connects residues C39 and C57. 5 PbH1 repeats span residues 172–203 (SSGL…DIGD), 204–225 (SDSI…AINS), 226–246 (GTNI…SIGS), 255–276 (VETV…RVKA), and 284–306 (IKGV…TIRQ). The active-site Proton donor is D218. Residues C220 and C236 are joined by a disulfide bond. H240 is an active-site residue. 2 cysteine pairs are disulfide-bonded: C346–C352 and C370–C378.

The protein belongs to the glycosyl hydrolase 28 family.

It is found in the secreted. It carries out the reaction (1,4-alpha-D-galacturonosyl)n+m + H2O = (1,4-alpha-D-galacturonosyl)n + (1,4-alpha-D-galacturonosyl)m.. The chain is Polygalacturonase (PEPG1) from Penicillium expansum (Blue mold rot fungus).